Here is a 107-residue protein sequence, read N- to C-terminus: Small ribosomal subunit protein uS17 (107 aa).

This sequence belongs to the universal ribosomal protein uS17 family. In terms of assembly, part of the 30S ribosomal subunit.

Its function is as follows. One of the primary rRNA binding proteins, it binds specifically to the 5'-end of 16S ribosomal RNA. This is Small ribosomal subunit protein uS17 from Aquifex aeolicus (strain VF5).